We begin with the raw amino-acid sequence, 328 residues long: MSKSPVRVAVTGAAGQIGYALLFRIASGEMLGKDQPVILQLLEVPVEKAQEALKGVIMELEDCAFPLLAGIEAHSDPMTAFKDTDYALLVGARPRGPGMERADLLAANAQIFTAQGKALNAVASRNVKVLVVGNPANTNAYIAMKSAPDLPAKNFTAMLRLDHNRAASQIAAKTGKPVASIEKLAVWGNHSPTMYADYRFATIGGESVKDMINDDVWNRDVFLPTVGKRGAAIIAARGVSSAASAANAAIDHMRDWALGTNGAWVTMGVPSKGEYGIPAETMFGYPVTCEGGEYKIVEGLPIDAFSQECINKTLAELEGEKDGVKHLL.

12–18 (GAAGQIG) serves as a coordination point for NAD(+). The substrate site is built by R95 and R101. Residues N108, Q115, and 132-134 (VGN) contribute to the NAD(+) site. The substrate site is built by N134 and R165. H190 functions as the Proton acceptor in the catalytic mechanism.

This sequence belongs to the LDH/MDH superfamily. MDH type 2 family.

It carries out the reaction (S)-malate + NAD(+) = oxaloacetate + NADH + H(+). In terms of biological role, catalyzes the reversible oxidation of malate to oxaloacetate. This is Malate dehydrogenase from Leptothrix cholodnii (strain ATCC 51168 / LMG 8142 / SP-6) (Leptothrix discophora (strain SP-6)).